Reading from the N-terminus, the 282-residue chain is DegV domain-containing protein M6_Spy0690 (282 aa).

Positions 3–280 (LAVITDSTAT…EGAIAFGVTP (278 aa)) constitute a DegV domain. Residues Thr-61 and Ser-94 each coordinate hexadecanoate.

In terms of biological role, may bind long-chain fatty acids, such as palmitate, and may play a role in lipid transport or fatty acid metabolism. The sequence is that of DegV domain-containing protein M6_Spy0690 from Streptococcus pyogenes serotype M6 (strain ATCC BAA-946 / MGAS10394).